Here is a 494-residue protein sequence, read N- to C-terminus: UPF0371 protein SPy_1343/M5005_Spy1095 (494 aa).

It belongs to the UPF0371 family.

The sequence is that of UPF0371 protein SPy_1343/M5005_Spy1095 from Streptococcus pyogenes serotype M1.